The primary structure comprises 820 residues: Trimethylamine-N-oxide reductase (820 aa).

The segment at residues 1–33 (MAITRRSFLKGVATTSAASVIGPSLLASASANA) is a signal peptide (tat-type signal). Ser-179 contacts Mo-bis(molybdopterin guanine dinucleotide).

This sequence belongs to the prokaryotic molybdopterin-containing oxidoreductase family. Requires Mo-bis(molybdopterin guanine dinucleotide) as cofactor. In terms of processing, predicted to be exported by the Tat system. The position of the signal peptide cleavage has not been experimentally proven.

The protein localises to the periplasm. The enzyme catalyses trimethylamine + 2 Fe(III)-[cytochrome c] + H2O = trimethylamine N-oxide + 2 Fe(II)-[cytochrome c] + 3 H(+). Reduces trimethylamine-N-oxide (TMAO) into trimethylamine; an anaerobic reaction coupled to energy-yielding reactions. The protein is Trimethylamine-N-oxide reductase (torA) of Vibrio parahaemolyticus serotype O3:K6 (strain RIMD 2210633).